Consider the following 72-residue polypeptide: Translation initiation factor IF-1 (72 aa).

The S1-like domain occupies 1 to 72 (MAKEDVIEVE…TRGRITYRFK (72 aa)).

The protein belongs to the IF-1 family. In terms of assembly, component of the 30S ribosomal translation pre-initiation complex which assembles on the 30S ribosome in the order IF-2 and IF-3, IF-1 and N-formylmethionyl-tRNA(fMet); mRNA recruitment can occur at any time during PIC assembly.

The protein resides in the cytoplasm. Its function is as follows. One of the essential components for the initiation of protein synthesis. Stabilizes the binding of IF-2 and IF-3 on the 30S subunit to which N-formylmethionyl-tRNA(fMet) subsequently binds. Helps modulate mRNA selection, yielding the 30S pre-initiation complex (PIC). Upon addition of the 50S ribosomal subunit IF-1, IF-2 and IF-3 are released leaving the mature 70S translation initiation complex. This is Translation initiation factor IF-1 from Listeria innocua serovar 6a (strain ATCC BAA-680 / CLIP 11262).